Here is a 25-residue protein sequence, read N- to C-terminus: Chrysophsin-2 (25 aa).

Histidine 25 bears the Histidine amide mark.

As to expression, gill.

Its subcellular location is the secreted. Functionally, has antibacterial activity against Gram-positive bacteria B.subtilis ATCC 6633, L.garvieae ATCC 49156 and S.iniae F-8502, and Gram-negative bacteria E.coli WT-2, V.anguillarum ATCC 19264, V.penaeicida KHA, V.harveyi ATCC 14126, V.vulnificus ATCC 33148 and A.salmonicida NCMB 1102. Has hemolytic activity against human red blood cells. Seems to disrupt the membranes by adopting an alpha helical conformation. May play a significant role in innate host defense. In Pagrus major (Red sea bream), this protein is Chrysophsin-2.